Consider the following 863-residue polypeptide: Receptor-like protein 9DC3 (863 aa).

Positions 1–21 (MGCVKLVFFMLYVFLFQLVSS) are cleaved as a signal peptide. The Extracellular portion of the chain corresponds to 22 to 812 (SSLPHLCPED…EEDSPMISWQ (791 aa)). The segment at 24-90 (LPHLCPEDQA…GVHCDETTGQ (67 aa)) is N-cap. Asn71 and Asn108 each carry an N-linked (GlcNAc...) asparagine glycan. An LRR 1; degenerate repeat occupies 91-114 (VIALDLRCSQLQGKFHSNSSLFQL). LRR repeat units follow at residues 115–138 (SNLK…KFGE) and 140–163 (SDLT…ISHL). Residues 164–190 (SKLHVLLIGDQYGLSIVPHNFEPLLKN) form an LRR 4; degenerate repeat. N-linked (GlcNAc...) asparagine glycosylation is found at Asn190, Asn203, and Asn211. LRR repeat units lie at residues 191 to 213 (LTQL…SNFS), 214 to 237 (SHLT…VFHL), 240 to 262 (LEFL…KWNS), 264 to 286 (ASLM…SFSH), 287 to 311 (LTSL…LWNL), and 312 to 336 (TNIE…IFEK). N-linked (GlcNAc...) asparagine glycosylation occurs at Asn261. N-linked (GlcNAc...) asparagine glycosylation is found at Asn299 and Asn310. An LRR 11; degenerate repeat occupies 337-357 (LKKLSLFRNDNLDGGLEFLSF). LRR repeat units follow at residues 358 to 382 (NTQL…ISGL), 383 to 406 (QNLE…IFSL), 408 to 428 (SLVE…EFKS), 429 to 452 (KTLS…LLNQ), 454 to 476 (NLQL…ICNL), 477 to 500 (KTLI…VVER), 502 to 524 (EYLS…TFSV), 525 to 549 (GNIL…LINC), 551 to 572 (YLAL…WLGH), 573 to 597 (LSQL…GNTN), 599 to 623 (FTRL…ILGN), 667 to 690 (LDSN…IIGD), 691 to 714 (LVGL…SFQN), 715 to 739 (LSVL…LASL), and 741 to 759 (FLEV…IPKG). Asn378, Asn396, and Asn416 each carry an N-linked (GlcNAc...) asparagine glycan. A glycan (N-linked (GlcNAc...) asparagine) is linked at Asn464. Asn519 carries an N-linked (GlcNAc...) asparagine glycan. N-linked (GlcNAc...) asparagine glycosylation is present at Asn563. 3 N-linked (GlcNAc...) asparagine glycosylation sites follow: Asn674, Asn698, and Asn714. N-linked (GlcNAc...) asparagine glycans are attached at residues Asn746 and Asn767. Residues 760–812 (KQFDSFGNTSYQGNDGLCGFPLSKLCGGDDQVTTPAELDQEEEEEDSPMISWQ) form a C-cap/acidic domain region. A helical membrane pass occupies residues 813-833 (GVLVGYGCGLVIGLSVIYIMW). At 834–863 (STQYPAWFSRMHLKLEQIVTTRMKKHKKRY) the chain is on the cytoplasmic side.

It belongs to the RLP family.

The protein resides in the cell membrane. Functionally, involved in plant defense. Confers resistance to the fungal pathogen C.fulvum through recognition of the AVR9 elicitor protein. The protein is Receptor-like protein 9DC3 of Solanum pimpinellifolium (Currant tomato).